A 306-amino-acid polypeptide reads, in one-letter code: Tyrosine recombinase XerC (306 aa).

One can recognise a Core-binding (CB) domain in the interval 6 to 92; sequence NTLYLQTKPY…ALRQWFSYLI (87 aa). The 180-residue stretch at 113 to 292 folds into the Tyr recombinase domain; the sequence is RLPKNIDAEQ…DFQHLAKIYD (180 aa). Catalysis depends on residues R152, K176, H244, R247, and H270. Catalysis depends on Y279, which acts as the O-(3'-phospho-DNA)-tyrosine intermediate.

The protein belongs to the 'phage' integrase family. XerC subfamily. In terms of assembly, forms a cyclic heterotetrameric complex composed of two molecules of XerC and two molecules of XerD.

It localises to the cytoplasm. In terms of biological role, site-specific tyrosine recombinase, which acts by catalyzing the cutting and rejoining of the recombining DNA molecules. The XerC-XerD complex is essential to convert dimers of the bacterial chromosome into monomers to permit their segregation at cell division. It also contributes to the segregational stability of plasmids. This is Tyrosine recombinase XerC from Actinobacillus pleuropneumoniae serotype 7 (strain AP76).